The following is a 164-amino-acid chain: Putative ankyrin repeat protein RBE_0585 (164 aa).

ANK repeat units lie at residues 42 to 107 and 126 to 149; these read NQDT…VAIL and DKDTPLIEAARAALPQSISFMLDY.

The chain is Putative ankyrin repeat protein RBE_0585 from Rickettsia bellii (strain RML369-C).